We begin with the raw amino-acid sequence, 146 residues long: MSIIQEFREFAVKGNMIDLAVGVIIGGAFGKIVDSLVKDIIMPLITVITGGGVDFTQKFVVLGNNPDNLQSLDALQKAGVNVLTYGNFLTILINFIILAWVVFLMVKLINRMRRKQEEAPAAPAPTPEDIALLREIRDELKNRPQV.

A run of 3 helical transmembrane segments spans residues I17 to V37, I40 to V60, and L89 to I109.

The protein belongs to the MscL family. Homopentamer.

Its subcellular location is the cell inner membrane. In terms of biological role, channel that opens in response to stretch forces in the membrane lipid bilayer. May participate in the regulation of osmotic pressure changes within the cell. This is Large-conductance mechanosensitive channel from Acinetobacter baylyi (strain ATCC 33305 / BD413 / ADP1).